Here is a 219-residue protein sequence, read N- to C-terminus: Ropporin-1-like protein (219 aa).

The 38-residue stretch at 17-54 (PELPDILKQFTKAAIRTQPHDLLQWSAAYFDSLSKGEP) folds into the RIIa domain.

This sequence belongs to the ropporin family. Component of axonemal radial spoke complexes.

The protein resides in the cell projection. The protein localises to the cilium. It localises to the flagellum. In terms of biological role, functions as part of axonemal radial spoke complexes that play an important part in the motility of sperm and cilia. Important for male fertility. Involved in fibrous sheath integrity and sperm motility, plays a role in PKA-dependent signaling processes required for spermatozoa capacitation. This Xenopus laevis (African clawed frog) protein is Ropporin-1-like protein (ropn1l).